The following is a 526-amino-acid chain: MSGYKVEVDKRRTFAIISHPDAGKTTITEKVLLFGNALQKAGTVKGKKSGQHAKSDWMEMEKDRGISITTSVMQFPYSDALVNLLDTPGHEDFSEDTYRTLTAVDSCLMVIDSAKGVEQRTIKLMEVTRLRDTPIVTFMNKLDRDIRDPIELMDEVEEVLNIKCAPITWPIGAGKEFKGVYHLLRDEVILYQGGMGHTIQDSRVIKGLDNPELDEAIGSYAAEIRDEMELVVGASHEFDHQQFLKGELTPVYFGTALGNFGVDHILDGIVEWAPVPQPRETEIREVQPEEEKFSGFVFKIQANMDPKHRDRVAFMRICSGRYEQGMKMHHVRLGKDVNVSDALTFMAGDRNRAEAAYPGDIIGLHNHGTIRIGDTFTQGEKLRFTGVPNFAPEMFRRIRLKDPLKQKQLLKGLVQLSEEGAVQVFRPLDSNDLIVGAVGVLQFEVVVGRLKTEYKVEAIYEAISVATARWVYCDDHKKLDEFKRKCSMNLALDGGDNLTYIAPTMVNLNLSMERYPDIEFAKTREN.

The 269-residue stretch at 9 to 277 folds into the tr-type G domain; that stretch reads DKRRTFAIIS…GIVEWAPVPQ (269 aa). Residues 18-25, 86-90, and 140-143 each bind GTP; these read SHPDAGKT, DTPGH, and NKLD.

It belongs to the TRAFAC class translation factor GTPase superfamily. Classic translation factor GTPase family. PrfC subfamily.

Its subcellular location is the cytoplasm. In terms of biological role, increases the formation of ribosomal termination complexes and stimulates activities of RF-1 and RF-2. It binds guanine nucleotides and has strong preference for UGA stop codons. It may interact directly with the ribosome. The stimulation of RF-1 and RF-2 is significantly reduced by GTP and GDP, but not by GMP. The sequence is that of Peptide chain release factor 3 from Shewanella pealeana (strain ATCC 700345 / ANG-SQ1).